The chain runs to 924 residues: Isoleucine--tRNA ligase (924 aa).

The short motif at 57-67 is the 'HIGH' region element; it reads PYANGDIHMGH. Residue E552 coordinates L-isoleucyl-5'-AMP. The 'KMSKS' region motif lies at 593 to 597; it reads KMSKS. K596 is a binding site for ATP. 4 residues coordinate Zn(2+): C891, C894, C911, and C914.

The protein belongs to the class-I aminoacyl-tRNA synthetase family. IleS type 1 subfamily. In terms of assembly, monomer. It depends on Zn(2+) as a cofactor.

The protein localises to the cytoplasm. It carries out the reaction tRNA(Ile) + L-isoleucine + ATP = L-isoleucyl-tRNA(Ile) + AMP + diphosphate. Catalyzes the attachment of isoleucine to tRNA(Ile). As IleRS can inadvertently accommodate and process structurally similar amino acids such as valine, to avoid such errors it has two additional distinct tRNA(Ile)-dependent editing activities. One activity is designated as 'pretransfer' editing and involves the hydrolysis of activated Val-AMP. The other activity is designated 'posttransfer' editing and involves deacylation of mischarged Val-tRNA(Ile). The sequence is that of Isoleucine--tRNA ligase from Geobacillus kaustophilus (strain HTA426).